Consider the following 446-residue polypeptide: N-succinylarginine dihydrolase (446 aa).

Residues 19 to 28 (AGLSFGNVAS), N110, and 137 to 138 (HR) contribute to the substrate site. E174 is a catalytic residue. Residue R213 participates in substrate binding. H249 is a catalytic residue. Residues D251 and N364 each contribute to the substrate site. The Nucleophile role is filled by C370.

It belongs to the succinylarginine dihydrolase family. In terms of assembly, homodimer.

The catalysed reaction is N(2)-succinyl-L-arginine + 2 H2O + 2 H(+) = N(2)-succinyl-L-ornithine + 2 NH4(+) + CO2. It participates in amino-acid degradation; L-arginine degradation via AST pathway; L-glutamate and succinate from L-arginine: step 2/5. Its function is as follows. Catalyzes the hydrolysis of N(2)-succinylarginine into N(2)-succinylornithine, ammonia and CO(2). This is N-succinylarginine dihydrolase from Burkholderia cenocepacia (strain ATCC BAA-245 / DSM 16553 / LMG 16656 / NCTC 13227 / J2315 / CF5610) (Burkholderia cepacia (strain J2315)).